The chain runs to 363 residues: 5-formaminoimidazole-4-carboxamide-1-(beta)-D-ribofuranosyl 5'-monophosphate synthetase (363 aa).

5-amino-1-(5-phospho-beta-D-ribosyl)imidazole-4-carboxamide-binding residues include H29 and S96. Residues 118–354 (RDILRWEAER…ISREIKNAIE (237 aa)) enclose the ATP-grasp domain. ATP is bound by residues 148-210 (PEDI…TNFC) and E232. 5-amino-1-(5-phospho-beta-D-ribosyl)imidazole-4-carboxamide is bound at residue N260. Positions 299 and 312 each coordinate Mg(2+).

It belongs to the phosphohexose mutase family. Mg(2+) is required as a cofactor. The cofactor is Mn(2+).

It catalyses the reaction 5-amino-1-(5-phospho-beta-D-ribosyl)imidazole-4-carboxamide + formate + ATP = 5-formamido-1-(5-phospho-D-ribosyl)imidazole-4-carboxamide + ADP + phosphate. It functions in the pathway purine metabolism; IMP biosynthesis via de novo pathway; 5-formamido-1-(5-phospho-D-ribosyl)imidazole-4-carboxamide from 5-amino-1-(5-phospho-D-ribosyl)imidazole-4-carboxamide (formate route): step 1/1. Functionally, catalyzes the ATP- and formate-dependent formylation of 5-aminoimidazole-4-carboxamide-1-beta-d-ribofuranosyl 5'-monophosphate (AICAR) to 5-formaminoimidazole-4-carboxamide-1-beta-d-ribofuranosyl 5'-monophosphate (FAICAR) in the absence of folates. This Methanosphaera stadtmanae (strain ATCC 43021 / DSM 3091 / JCM 11832 / MCB-3) protein is 5-formaminoimidazole-4-carboxamide-1-(beta)-D-ribofuranosyl 5'-monophosphate synthetase.